We begin with the raw amino-acid sequence, 159 residues long: Probable minor fimbrial protein (159 aa).

The propeptide at 1-6 is leader sequence; that stretch reads MKKMHG. Phe-7 bears the N-methylphenylalanine mark. The chain crosses the membrane as a helical span at residues 7 to 29; that stretch reads FTLIELMIVVAIIGVLASIALMQ. Cystine bridges form between Cys-56-Cys-71 and Cys-140-Cys-153.

It belongs to the N-Me-Phe pilin family. In terms of assembly, the pili are polar flexible filaments of about 5.4 nanometers diameter and 2.5 micrometers average length; they consist of only a single polypeptide chain arranged in a helical configuration of five subunits per turn in the assembled pilus.

The protein resides in the fimbrium. It is found in the membrane. The protein is Probable minor fimbrial protein (fimZ) of Dichelobacter nodosus (Bacteroides nodosus).